Consider the following 71-residue polypeptide: Cruzioseptin-2 (71 aa).

An N-terminal signal peptide occupies residues 1 to 22 (MAFLKKSLFLVLFLGLVSLSIC). The propeptide occupies 23-43 (EEEKREEENEEVQEDDDQSEE). Glutamine 68 carries the post-translational modification Glutamine amide. Positions 70 to 71 (EQ) are excised as a propeptide.

Expressed by the skin glands.

It localises to the secreted. Functionally, has antimicrobial activity against Gram-negative bacterium E.coli (MIC=26.35 uM), against Gram-positive bacterium S.aureus (MIC=6.59 uM) and against fungus C.albicans (MIC=13.18 uM). At higher concentrations also has a bactericidal and fungicidal effect. Has hemagglutinating activity against horse erythrocytes. This chain is Cruzioseptin-2, found in Cruziohyla calcarifer (Splendid leaf frog).